We begin with the raw amino-acid sequence, 1020 residues long: Protein SCAR3 (1020 aa).

Disordered regions lie at residues 167–198 (NLSQGNKKFQKDKKHCKMKKKKTSSRSRDMSR), 351–382 (DEKPSYGEGIGGVDFHSKDNENDKSESGLRKR), and 802–827 (DYLSDNHSLSNSEPWEESSDSHGRKE). The segment covering 174-191 (KFQKDKKHCKMKKKKTSS) has biased composition (basic residues). Basic and acidic residues predominate over residues 365 to 382 (FHSKDNENDKSESGLRKR). A compositionally biased stretch (polar residues) spans 802-814 (DYLSDNHSLSNSE). One can recognise a WH2 domain in the interval 954-972 (ETGDFLQQIRTQQFNLRPV).

Belongs to the SCAR/WAVE family. Binds BRK1. Interacts with SPK1, ABI1, ABI2, ABI3 and ABI4. In terms of tissue distribution, expressed in expanding cotyledons, expanding leaves and expanding siliques containing developing embryos. Detected in unopened flower buds. Reduced expression in mature leaves and mature cotyledons.

The protein localises to the cytoplasm. The protein resides in the cytoskeleton. In terms of biological role, involved in regulation of actin and microtubule organization. Part of a WAVE complex that activates the Arp2/3 complex. Regulates trichome branch positioning and expansion. In Arabidopsis thaliana (Mouse-ear cress), this protein is Protein SCAR3 (SCAR3).